Consider the following 571-residue polypeptide: Proline--tRNA ligase (571 aa).

Belongs to the class-II aminoacyl-tRNA synthetase family. ProS type 1 subfamily. Homodimer.

It localises to the cytoplasm. It carries out the reaction tRNA(Pro) + L-proline + ATP = L-prolyl-tRNA(Pro) + AMP + diphosphate. Functionally, catalyzes the attachment of proline to tRNA(Pro) in a two-step reaction: proline is first activated by ATP to form Pro-AMP and then transferred to the acceptor end of tRNA(Pro). As ProRS can inadvertently accommodate and process non-cognate amino acids such as alanine and cysteine, to avoid such errors it has two additional distinct editing activities against alanine. One activity is designated as 'pretransfer' editing and involves the tRNA(Pro)-independent hydrolysis of activated Ala-AMP. The other activity is designated 'posttransfer' editing and involves deacylation of mischarged Ala-tRNA(Pro). The misacylated Cys-tRNA(Pro) is not edited by ProRS. This Pseudomonas syringae pv. syringae (strain B728a) protein is Proline--tRNA ligase.